We begin with the raw amino-acid sequence, 150 residues long: UPF0756 membrane protein PMI1560 (150 aa).

4 consecutive transmembrane segments (helical) span residues 16-36 (GLGIISHNMTVTLAMIFLLVI), 51-71 (YGMTIGILILTIGVMTPIATG), 82-102 (FLNWKSLLAIAIGIIVSWLGA), and 123-143 (VIGVALFRGVPVGPLIAAGIL).

Belongs to the UPF0756 family.

Its subcellular location is the cell membrane. The chain is UPF0756 membrane protein PMI1560 from Proteus mirabilis (strain HI4320).